Here is a 77-residue protein sequence, read N- to C-terminus: Small ribosomal subunit protein bS16c (77 aa).

It belongs to the bacterial ribosomal protein bS16 family.

It localises to the plastid. The protein resides in the chloroplast. The protein is Small ribosomal subunit protein bS16c of Eucalyptus globulus subsp. globulus (Tasmanian blue gum).